Reading from the N-terminus, the 1418-residue chain is JmjC domain-containing histone demethylation protein 1 (1418 aa).

Disordered stretches follow at residues 1 to 86, 102 to 162, and 308 to 329; these read MIGA…SSST, APLS…STFD, and GADR…SDEN. Basic and acidic residues predominate over residues 44–60; sequence WIDRGDSQAASYDRDRV. Residues 61-71 show a composition bias toward polar residues; the sequence is TSNNDVYSSTN. The span at 127–139 shows a compositional bias: basic and acidic residues; sequence STERPAKRPRSEK. A compositionally biased stretch (polar residues) spans 143-162; sequence PLHQPQTTVAPDANPSSTFD. Residues 308 to 321 are compositionally biased toward basic and acidic residues; sequence GADRASLDVPPRGD. The PHD-type zinc finger occupies 331–391; sequence QANCAACNLV…KFICRRCRPI (61 aa). The JmjC domain occupies 588–746; sequence VSQSKLGKLI…MQIKVAKIEK (159 aa). Substrate is bound at residue Thr-639. Positions 642 and 644 each coordinate Fe cation. A substrate-binding site is contributed by Lys-659. His-714 contributes to the Fe cation binding site. Disordered stretches follow at residues 891 to 964, 1090 to 1118, 1130 to 1195, and 1250 to 1394; these read PQWT…TVEI, NAAT…CDDC, YGRI…HTQR, and KPTA…DEPD. Positions 907–925 are enriched in basic and acidic residues; the sequence is LTEKKPAGRPSRRSERNAE. Basic and acidic residues-rich tracts occupy residues 1130–1143 and 1186–1195; these read YGRI…ERSK and AEGDMSHTQR. A compositionally biased stretch (polar residues) spans 1250–1263; it reads KPTASLVSPPTSQA. The span at 1341 to 1352 shows a compositional bias: low complexity; the sequence is SSKKPASRPSSS.

The protein belongs to the JHDM1 histone demethylase family. Fe(2+) is required as a cofactor.

Its subcellular location is the nucleus. It carries out the reaction N(6),N(6)-dimethyl-L-lysyl(36)-[histone H3] + 2 2-oxoglutarate + 2 O2 = L-lysyl(36)-[histone H3] + 2 formaldehyde + 2 succinate + 2 CO2. Its function is as follows. Histone demethylase that specifically demethylates 'Lys-36' of histone H3, thereby playing a central role in histone code. The sequence is that of JmjC domain-containing histone demethylation protein 1 (jhd1) from Aspergillus fumigatus (strain ATCC MYA-4609 / CBS 101355 / FGSC A1100 / Af293) (Neosartorya fumigata).